We begin with the raw amino-acid sequence, 432 residues long: Tol-Pal system protein TolB (432 aa).

The first 24 residues, 1-24 (MKLVTRMWSILIVFFLAVLQPAQA), serve as a signal peptide directing secretion.

The protein belongs to the TolB family. As to quaternary structure, the Tol-Pal system is composed of five core proteins: the inner membrane proteins TolA, TolQ and TolR, the periplasmic protein TolB and the outer membrane protein Pal. They form a network linking the inner and outer membranes and the peptidoglycan layer.

The protein resides in the periplasm. In terms of biological role, part of the Tol-Pal system, which plays a role in outer membrane invagination during cell division and is important for maintaining outer membrane integrity. In Pasteurella multocida (strain Pm70), this protein is Tol-Pal system protein TolB.